The primary structure comprises 111 residues: UPF0145 protein BTH_I2656 (111 aa).

Belongs to the UPF0145 family.

The chain is UPF0145 protein BTH_I2656 from Burkholderia thailandensis (strain ATCC 700388 / DSM 13276 / CCUG 48851 / CIP 106301 / E264).